We begin with the raw amino-acid sequence, 522 residues long: Putative zinc finger protein 286B (522 aa).

The tract at residues 1–30 (METDLAEMPEKGVLSSQDSPHFQEKSTEEG) is disordered. 10 consecutive C2H2-type zinc fingers follow at residues 244–266 (HKCNDCGELFTCHSVHIQHQRVH), 272–294 (YTCNECGKSFSHRANLTKHQRTH), 299–321 (FECRECKKTFTESSSLATHQRIH), 327–349 (YECNECGKGFNRSTHLVQHQLIH), 355–377 (YECNECDKAFIHSSALIKHQRTH), 383–405 (YKCQECGKAFSHCSSLTKHQRVH), 411–433 (YECSECGKTFSQSTHLVQHQRIH), 439–461 (YECSECGKTFSQSSNFAKHQRIH), 467–489 (YKCSECGKAFIHSSALIQHQRTH), and 495–517 (FRCNECGKSFKCSSSLIRHQRVH).

The protein belongs to the krueppel C2H2-type zinc-finger protein family.

Its subcellular location is the nucleus. Its function is as follows. May be involved in transcriptional regulation. In Homo sapiens (Human), this protein is Putative zinc finger protein 286B (ZNF286B).